The sequence spans 306 residues: Protein SEC13 homolog (306 aa).

6 WD repeats span residues 11–50, 56–97, 102–143, 150–195, 202–245, and 252–291; these read QHRDAIHDAQLNIYGNRLATCGSDRLVKIFEVRPNGQSYP, GHNG…WQKT, THEA…QQWQ, CHDQ…NEWT, CHKD…TAEW, and QAPCALYHASFSPCGSFLSVSGDDNMITLWRENLQGQWIK.

Belongs to the WD repeat SEC13 family. In terms of assembly, probably part of the GATOR complex.

It localises to the cytoplasmic vesicle. The protein resides in the COPII-coated vesicle membrane. The protein localises to the endoplasmic reticulum membrane. Its subcellular location is the nucleus. It is found in the nuclear pore complex. It localises to the lysosome membrane. Functionally, functions as a component of the nuclear pore complex (NPC) and the COPII coat. In terms of biological role, as a component of the GATOR complex may function in the amino acid-sensing branch of the TORC1 signaling pathway. The sequence is that of Protein SEC13 homolog from Caenorhabditis briggsae.